The chain runs to 151 residues: Ubiquitin-conjugating enzyme E2 N (151 aa).

Residues 3 to 149 enclose the UBC core domain; sequence SLPRRIIKET…AREWTQKYAV (147 aa). C87 acts as the Glycyl thioester intermediate in catalysis.

This sequence belongs to the ubiquitin-conjugating enzyme family.

The catalysed reaction is S-ubiquitinyl-[E1 ubiquitin-activating enzyme]-L-cysteine + [E2 ubiquitin-conjugating enzyme]-L-cysteine = [E1 ubiquitin-activating enzyme]-L-cysteine + S-ubiquitinyl-[E2 ubiquitin-conjugating enzyme]-L-cysteine.. It participates in protein modification; protein ubiquitination. In terms of biological role, catalyzes the covalent attachment of ubiquitin to other proteins. This is Ubiquitin-conjugating enzyme E2 N (ben) from Drosophila melanogaster (Fruit fly).